The chain runs to 233 residues: Ion-translocating oxidoreductase complex subunit E (233 aa).

The next 6 helical transmembrane spans lie at 18–38 (ALVQ…ATNA), 39–59 (LGLG…VSAL), 69–89 (IPIY…LINA), 92–112 (FGLY…CIVI), 128–148 (ALDG…LGAL), and 182–202 (PFLL…LLAG).

The protein belongs to the NqrDE/RnfAE family. As to quaternary structure, the complex is composed of six subunits: RnfA, RnfB, RnfC, RnfD, RnfE and RnfG.

It localises to the cell inner membrane. Functionally, part of a membrane-bound complex that couples electron transfer with translocation of ions across the membrane. This is Ion-translocating oxidoreductase complex subunit E from Yersinia pseudotuberculosis serotype O:1b (strain IP 31758).